The chain runs to 608 residues: Chaperone protein HtpG (608 aa).

The segment at 1–332 (MQFQTEVNQL…VEDLPLNVSR (332 aa)) is a; substrate-binding. The b stretch occupies residues 333-536 (EILQENQILK…KNKPDFAMQQ (204 aa)). A c region spans residues 537 to 608 (LLKQMGQEQN…LTKIINKAFS (72 aa)).

The protein belongs to the heat shock protein 90 family. Homodimer.

It localises to the cytoplasm. Molecular chaperone. Has ATPase activity. The chain is Chaperone protein HtpG from Campylobacter jejuni subsp. jejuni serotype O:23/36 (strain 81-176).